Reading from the N-terminus, the 276-residue chain is Bis(5'-nucleosyl)-tetraphosphatase, symmetrical (276 aa).

The protein belongs to the Ap4A hydrolase family.

The enzyme catalyses P(1),P(4)-bis(5'-adenosyl) tetraphosphate + H2O = 2 ADP + 2 H(+). In terms of biological role, hydrolyzes diadenosine 5',5'''-P1,P4-tetraphosphate to yield ADP. The polypeptide is Bis(5'-nucleosyl)-tetraphosphatase, symmetrical (Legionella pneumophila (strain Corby)).